The chain runs to 518 residues: Arginyl-tRNA--protein transferase 1 (518 aa).

At Ser169 the chain carries Phosphoserine. Residues 175 to 203 form a disordered region; sequence EKLGSGEPSHSVKVHTVPKPGKGADLSKP.

This sequence belongs to the R-transferase family. As to quaternary structure, monomer. Interacts with LIAT1; LIAT1 is not a substrate of ATE1, the interaction takes place in the cytoplasm and seems to increase ATE1 arginyltransferase activity.

The protein localises to the nucleus. The protein resides in the cytoplasm. The enzyme catalyses an N-terminal L-alpha-aminoacyl-[protein] + L-arginyl-tRNA(Arg) = an N-terminal L-arginyl-L-aminoacyl-[protein] + tRNA(Arg) + H(+). Its function is as follows. Involved in the post-translational conjugation of arginine to the N-terminal aspartate or glutamate of a protein. This arginylation is required for degradation of the protein via the ubiquitin pathway. Does not arginylate cysteine residues. In Homo sapiens (Human), this protein is Arginyl-tRNA--protein transferase 1.